We begin with the raw amino-acid sequence, 471 residues long: Adenosylhomocysteinase (471 aa).

Substrate-binding residues include Thr-58, Asp-133, and Glu-195. NAD(+) is bound at residue 196–198 (TTT). Residues Lys-225 and Asp-229 each coordinate substrate. NAD(+) contacts are provided by residues Asn-230, 259-264 (GFGDVG), Glu-282, Asn-317, 338-340 (IGH), and Asn-383.

The protein belongs to the adenosylhomocysteinase family. The cofactor is NAD(+).

Its subcellular location is the cytoplasm. The enzyme catalyses S-adenosyl-L-homocysteine + H2O = L-homocysteine + adenosine. It functions in the pathway amino-acid biosynthesis; L-homocysteine biosynthesis; L-homocysteine from S-adenosyl-L-homocysteine: step 1/1. Functionally, may play a key role in the regulation of the intracellular concentration of adenosylhomocysteine. In Rhodopseudomonas palustris (strain BisB5), this protein is Adenosylhomocysteinase.